Reading from the N-terminus, the 228-residue chain is Small ribosomal subunit protein uS7m (228 aa).

A mitochondrion-targeting transit peptide spans 1–33 (MAASVRHLLKPWTPSLCLMRWSRYNPYYLDPEP).

The protein belongs to the universal ribosomal protein uS7 family. Component of the mitochondrial ribosome small subunit (28S) which comprises a 12S rRNA and about 30 distinct proteins.

It localises to the mitochondrion. This chain is Small ribosomal subunit protein uS7m (mrps7), found in Danio rerio (Zebrafish).